Consider the following 469-residue polypeptide: Citrate synthase, mitochondrial (469 aa).

Residues 1-33 (MAPVMRLGSAALRSSIHLTSRQTAFTAARCYSS) constitute a mitochondrion transit peptide. His-352 is an active-site residue.

It belongs to the citrate synthase family.

The protein localises to the mitochondrion matrix. The enzyme catalyses oxaloacetate + acetyl-CoA + H2O = citrate + CoA + H(+). It participates in carbohydrate metabolism; tricarboxylic acid cycle; isocitrate from oxaloacetate: step 1/2. In Neurospora crassa (strain ATCC 24698 / 74-OR23-1A / CBS 708.71 / DSM 1257 / FGSC 987), this protein is Citrate synthase, mitochondrial (cit-1).